Here is a 279-residue protein sequence, read N- to C-terminus: HTH-type transcriptional regulator HdfR (279 aa).

The HTH lysR-type domain occupies 1 to 58; sequence MDTELLKTFLEVSRTRHFGRAAESLYLTQSAVSFRIRQLENQLGVNLFTRHRNNIRLT. The H-T-H motif DNA-binding region spans 18–37; sequence FGRAAESLYLTQSAVSFRIR.

This sequence belongs to the LysR transcriptional regulatory family.

Its function is as follows. Negatively regulates the transcription of the flagellar master operon flhDC by binding to the upstream region of the operon. In Escherichia coli (strain SE11), this protein is HTH-type transcriptional regulator HdfR.